Consider the following 528-residue polypeptide: Tyrosine-protein kinase transforming protein Yes (528 aa).

The segment covering 1–12 (DKGPAMKYRTDN) has biased composition (basic and acidic residues). Positions 1–35 (DKGPAMKYRTDNTPEPISSHVSHYGSDSSQATQSP) are disordered. Over residues 18–29 (SSHVSHYGSDSS) the composition is skewed to low complexity. The 62-residue stretch at 81–142 (GGGTVFVALY…PSNYVAPADS (62 aa)) folds into the SH3 domain. Residues 148–245 (WYFGKMGRKD…GLCHKLTTVC (98 aa)) form the SH2 domain. The Protein kinase domain occupies 267 to 520 (LRLEVKLGQG…YIQSFLEDYF (254 aa)). ATP-binding positions include 273 to 281 (LGQGCFGEV) and Lys-295. The active-site Proton acceptor is Asp-386. Tyr-416 carries the post-translational modification Phosphotyrosine; by autocatalysis.

This sequence belongs to the protein kinase superfamily. Tyr protein kinase family. SRC subfamily.

The catalysed reaction is L-tyrosyl-[protein] + ATP = O-phospho-L-tyrosyl-[protein] + ADP + H(+). The polypeptide is Tyrosine-protein kinase transforming protein Yes (V-YES) (Galliformes (Y73SV)).